The primary structure comprises 161 residues: Allophycocyanin alpha-B chain (161 aa).

Asparagine 71 is subject to N4-methylasparagine. Cysteine 81 provides a ligand contact to (2R,3E)-phycocyanobilin.

Belongs to the phycobiliprotein family. Contains one covalently linked bilin chromophore.

The protein localises to the plastid. Its subcellular location is the chloroplast thylakoid membrane. Allophycocyanin is a photosynthetic bile pigment-protein complex with maximum absorption at approximately 650 nanometers. This Porphyra purpurea (Red seaweed) protein is Allophycocyanin alpha-B chain (apcD).